The following is a 525-amino-acid chain: METIIIALIAFIIGIIAIPIVLFAWIYIKDEKQQEHSILRNYPVIGRFRYILEKIGPELRQYLYSNDNEEQPFSRKEYEQTVISGKYKSRMMGFGSVRDFDKPGYYIRNAMFPKQREEMHVNQTPKIETQIYKMDADNLFKRKEHAEHIKADPYFLHPDDVQVIGEHTCEKPFYVKGLVGQSAMSYGSLGERAVTALSKGLHLAGGTWMNTGEGGLSEYHLKGGADIICQIGPGLFGVRKRNGEFSWEEFKRKSRIDQIKAFELKLAQGAKTRGGHVDGAKVSEEVADIRNVEPGKSIDSPNRFYEFSNPPEMLDFIEKLRDVGQKPVGIKLVAGHPEELHELFSHMQKSGKHPDFITIDGSEGGTGASFYELADTVGLPIMTALPIVDTLLKQYGLRSQLKIFASGKLLTPDKIAVALALGADFVNIARGMMFSVGCIRALVCHTNTCPAGVATTDPKLQKALSVEEKQHRVCNYVISLREGLFNLAAAAGINSPIHFSKEHVVYRKEDGSIINIDNLIHQFVS.

Residues 4–24 (IIIALIAFIIGIIAIPIVLFA) form a helical membrane-spanning segment.

Belongs to the glutamate synthase family.

The protein resides in the cell membrane. The polypeptide is Glutamate synthase large subunit-like protein YerD (yerD) (Bacillus subtilis (strain 168)).